A 790-amino-acid polypeptide reads, in one-letter code: Chorion peroxidase (790 aa).

An N-terminal signal peptide occupies residues 1–16 (MAKKVLLLSLYSAVLS). The propeptide occupies 17–209 (TWFGFGYVQC…ARIPRAIRKR (193 aa)). An N-acetylcysteine; in Chorion peroxidase light chain modification is found at Cys-210. The cysteines at positions 216 and 229 are disulfide-linked. A glycan (N-linked (Man) tryptophan) is linked at Trp-259. His-305 (proton acceptor) is an active-site residue. Asn-327 carries an N-linked (GlcNAc...) asparagine glycan. Tyr-353 is modified (3',4'-dihydroxyphenylalanine). A disulfide bridge connects residues Cys-433 and Cys-440. Trp-479 is a glycosylation site (N-linked (Man) tryptophan). His-551 is a heme b binding site. An N-linked (Man) tryptophan glycan is attached at Trp-680. A disulfide bond links Cys-746 and Cys-774. Residue Trp-785 is glycosylated (N-linked (Man) tryptophan).

This sequence belongs to the peroxidase family. XPO subfamily. As to quaternary structure, heterodimer. It depends on heme b as a cofactor. Post-translationally, N-glycosylated on Trp by mannose and on Asn by N-acetylglucosamine. There is a hexose glycosylation of an unidentified residue between 654 and 708; Trp-680 is conserved in closely related species and is probably mannosylated.

The protein localises to the secreted. It carries out the reaction 2 a phenolic donor + H2O2 = 2 a phenolic radical donor + 2 H2O. Its activity is regulated as follows. Extremely resistant to denaturating agents, such as SDS and organic solvents. Involved in the formation of a rigid and insoluble egg chorion by catalyzing chorion protein cross-linking through dityrosine formation and phenol oxidase-catalyzed chorion melanization. The sequence is that of Chorion peroxidase (pxt) from Aedes aegypti (Yellowfever mosquito).